Here is a 142-residue protein sequence, read N- to C-terminus: Transcription antitermination protein NusB (142 aa).

Belongs to the NusB family.

In terms of biological role, involved in transcription antitermination. Required for transcription of ribosomal RNA (rRNA) genes. Binds specifically to the boxA antiterminator sequence of the ribosomal RNA (rrn) operons. The chain is Transcription antitermination protein NusB from Buchnera aphidicola subsp. Cinara cedri (strain Cc).